A 480-amino-acid chain; its full sequence is LETM1 domain-containing protein LETM2, mitochondrial (480 aa).

The transit peptide at 1–25 (MAFYSYNSFLAIFWTRLPGHSVYPS) directs the protein to the mitochondrion. Residues 26–175 (CSHFPSLAFL…LLRTCADVFR (150 aa)) are Mitochondrial intermembrane-facing. Positions 88–118 (GKPQLEQTGKPKAASPQPTKEAKTETTEEKR) are disordered. Positions 107–118 (KEAKTETTEEKR) are enriched in basic and acidic residues. Residues 176–196 (LVPFMVFIIVPFMEFLIPVFL) traverse the membrane as a helical segment. Topologically, residues 197–480 (KLFPDMLPST…QNSKADSKGA (284 aa)) are mitochondrial matrix. The 218-residue stretch at 219-436 (KTMAAKLEIA…SAPQLKGTKD (218 aa)) folds into the Letm1 RBD domain. The tract at residues 398-444 (ELPPNIETPKPNLGIPTPPPPESKENLTDSAPQLKGTKDEEFIQLPP) is disordered.

It is found in the mitochondrion inner membrane. The polypeptide is LETM1 domain-containing protein LETM2, mitochondrial (Letm2) (Mus musculus (Mouse)).